The primary structure comprises 224 residues: Cysteine S-methyltransferase NleE (224 aa).

The interaction with host proteins TAB2, TAB3 and ZRANB3 stretch occupies residues 49–52; the sequence is GITR. Alanine 92, serine 98, arginine 107, glutamine 111, tyrosine 204, and glutamate 208 together coordinate S-adenosyl-L-methionine.

The protein belongs to the NleE/OspZ family. As to quaternary structure, monomer.

It localises to the secreted. It is found in the host nucleus. The catalysed reaction is L-cysteinyl-[protein] + S-adenosyl-L-methionine = S-methyl-L-cysteinyl-[protein] + S-adenosyl-L-homocysteine + H(+). Its function is as follows. Cysteine methyltransferase effector that inhibits host cell NF-kappa-B activation by preventing nuclear translocation of host protein RELA/p65. Acts by mediating cysteine methylation of host proteins TAB2 and TAB3: methylation of a conserved cysteine residue of the RanBP2-type zinc finger (NZF) of TAB2 and TAB3 disrupts zinc-binding, thereby inactivating the ubiquitin chain-binding activity of TAB2 and TAB3, leading to NF-kappa-B inactivation. Also mediates cysteine methylation of host protein ZRANB3, inactivating its ability to bind ubiquitin chains. This Escherichia coli O127:H6 (strain E2348/69 / EPEC) protein is Cysteine S-methyltransferase NleE.